A 1342-amino-acid chain; its full sequence is DNA-directed RNA polymerase subunit beta (1342 aa).

It belongs to the RNA polymerase beta chain family. The RNAP catalytic core consists of 2 alpha, 1 beta, 1 beta' and 1 omega subunit. When a sigma factor is associated with the core the holoenzyme is formed, which can initiate transcription.

It carries out the reaction RNA(n) + a ribonucleoside 5'-triphosphate = RNA(n+1) + diphosphate. DNA-dependent RNA polymerase catalyzes the transcription of DNA into RNA using the four ribonucleoside triphosphates as substrates. The chain is DNA-directed RNA polymerase subunit beta from Histophilus somni (strain 129Pt) (Haemophilus somnus).